A 457-amino-acid polypeptide reads, in one-letter code: Putative ankyrin repeat protein L112 (457 aa).

ANK repeat units follow at residues 62–91 (QRITLINYVVEKGYLDIIVYINNLKSNHNP), 104–132 (SKDTALWYSCKNNNLATTKYFINKGASIN), 133–162 (SSSLPLKTACIEGHLDTVKYLFSCGIEIIN), 193–219 (YINEAFVMACKYGYLDIAKYLFNLDCS), 220–249 (ITVDALYGACINGHIEVVEYLIGLGVDPRK), 251–279 (KCWAITSACQGGHLNIIEFLLSLGIKPKE), 281–309 (NVDAFYHACKTGNLEIAKYLKEIGADTIT), 310–339 (RRDWALELSARGGYLDVVKYIIELGVSQKS), 341–368 (NKALIDATLFCRVEVVEYLVDSGSDFRQ), 400–429 (NNNEPIKTVCHNGCIGILKLLIMYGVDYNP), and 431–457 (KDQLINIAKSNNQSAIIKYLEDLDTLK).

The protein is Putative ankyrin repeat protein L112 of Acanthamoeba polyphaga mimivirus (APMV).